The chain runs to 140 residues: Nucleoside diphosphate kinase (140 aa).

Residues K11, F59, R87, T93, R104, and N114 each contribute to the ATP site. Residue H117 is the Pros-phosphohistidine intermediate of the active site.

It belongs to the NDK family. As to quaternary structure, homotetramer. Mg(2+) serves as cofactor.

It is found in the cytoplasm. It catalyses the reaction a 2'-deoxyribonucleoside 5'-diphosphate + ATP = a 2'-deoxyribonucleoside 5'-triphosphate + ADP. It carries out the reaction a ribonucleoside 5'-diphosphate + ATP = a ribonucleoside 5'-triphosphate + ADP. Its function is as follows. Major role in the synthesis of nucleoside triphosphates other than ATP. The ATP gamma phosphate is transferred to the NDP beta phosphate via a ping-pong mechanism, using a phosphorylated active-site intermediate. This Brucella canis (strain ATCC 23365 / NCTC 10854 / RM-666) protein is Nucleoside diphosphate kinase.